Reading from the N-terminus, the 83-residue chain is Normal mucosa of esophagus-specific gene 1 protein (83 aa).

It belongs to the complex I NDUFA4 subunit family. In terms of tissue distribution, strongly expressed in vertebrae, brain, intestine and stomach.

Its subcellular location is the nucleus. The chain is Normal mucosa of esophagus-specific gene 1 protein (Nmes1) from Mus musculus (Mouse).